A 119-amino-acid polypeptide reads, in one-letter code: Beta-2-microglobulin (119 aa).

Residues methionine 1–alanine 21 form the signal peptide. The 89-residue stretch at proline 25–tyrosine 113 folds into the Ig-like C1-type domain. Cysteine 45 and cysteine 100 are disulfide-bonded.

This sequence belongs to the beta-2-microglobulin family. In terms of assembly, heterodimer of an alpha chain and a beta chain. Beta-2-microglobulin is the beta-chain of major histocompatibility complex class I molecules.

The protein resides in the secreted. Component of the class I major histocompatibility complex (MHC). Involved in the presentation of peptide antigens to the immune system. This is Beta-2-microglobulin (B2M) from Gallus gallus (Chicken).